Here is a 180-residue protein sequence, read N- to C-terminus: NADH-ubiquinone oxidoreductase chain 5 (180 aa).

The helical transmembrane segment at 131–148 (VYHYAFAMLLGSTPFVTF) threads the bilayer.

It belongs to the complex I subunit 5 family.

It localises to the mitochondrion inner membrane. The catalysed reaction is a ubiquinone + NADH + 5 H(+)(in) = a ubiquinol + NAD(+) + 4 H(+)(out). In terms of biological role, core subunit of the mitochondrial membrane respiratory chain NADH dehydrogenase (Complex I) that is believed to belong to the minimal assembly required for catalysis. Complex I functions in the transfer of electrons from NADH to the respiratory chain. The immediate electron acceptor for the enzyme is believed to be ubiquinone. The protein is NADH-ubiquinone oxidoreductase chain 5 (ND5) of Zea mays (Maize).